A 208-amino-acid polypeptide reads, in one-letter code: Thymidylate kinase (208 aa).

An ATP-binding site is contributed by 10–17; it reads GPEGSGKT.

It belongs to the thymidylate kinase family.

It catalyses the reaction dTMP + ATP = dTDP + ADP. In terms of biological role, phosphorylation of dTMP to form dTDP in both de novo and salvage pathways of dTTP synthesis. In Bacillus mycoides (strain KBAB4) (Bacillus weihenstephanensis), this protein is Thymidylate kinase.